A 420-amino-acid polypeptide reads, in one-letter code: UDP-glucuronic acid decarboxylase 1 (420 aa).

Methionine 1 bears the N-acetylmethionine mark. Over 1–19 (MVSKALLRLVSAVNRRRMK) the chain is Cytoplasmic. A helical; Signal-anchor for type II membrane protein transmembrane segment spans residues 20 to 40 (LLLGIALLAYVASVWGNFVNM). Topologically, residues 41–420 (RSIQENGELK…RIKKGRTRHS (380 aa)) are lumenal. At threonine 94 the chain carries Phosphothreonine. Residues glycine 98, phenylalanine 99, valine 100, aspartate 119, asparagine 120, phenylalanine 122, threonine 123, glycine 124, aspartate 144, and valine 145 each contribute to the NAD(+) site. The UDP-alpha-D-glucuronate site is built by leucine 149 and tyrosine 150. Leucine 159 and serine 161 together coordinate NAD(+). Lysine 177 contacts UDP-alpha-D-glucuronate. Threonine 178 contacts NAD(+). UDP-alpha-D-glucuronate-binding residues include asparagine 185, glycine 188, lysine 191, and arginine 192. The NAD(+) site is built by alanine 200, tyrosine 231, and lysine 235. The Proton acceptor role is filled by tyrosine 231. UDP-alpha-D-glucuronate contacts are provided by tyrosine 245, glutamine 248, and glutamate 249. NAD(+)-binding residues include threonine 261, histidine 267, and arginine 272. An N-linked (GlcNAc...) asparagine glycan is attached at asparagine 316.

Belongs to the NAD(P)-dependent epimerase/dehydratase family. UDP-glucuronic acid decarboxylase subfamily. In terms of assembly, homodimer and homotetramer. Interacts with AKT1. Requires NAD(+) as cofactor.

It localises to the golgi apparatus. The protein localises to the golgi stack membrane. The enzyme catalyses UDP-alpha-D-glucuronate + H(+) = UDP-alpha-D-xylose + CO2. It functions in the pathway nucleotide-sugar biosynthesis; UDP-alpha-D-xylose biosynthesis; UDP-alpha-D-xylose from UDP-alpha-D-glucuronate: step 1/1. Its function is as follows. Catalyzes the NAD-dependent decarboxylation of UDP-glucuronic acid to UDP-xylose. Necessary for the biosynthesis of the core tetrasaccharide in glycosaminoglycan biosynthesis. In Homo sapiens (Human), this protein is UDP-glucuronic acid decarboxylase 1.